A 654-amino-acid polypeptide reads, in one-letter code: Cysteine-rich receptor-like protein kinase 40 (654 aa).

A signal peptide spans 1–27; it reads MGKCSALMIFLSSSLLLVLQTLHVVNA. 2 Gnk2-homologous domains span residues 28 to 131 and 143 to 250; these read VKCF…NQST and WPSP…LYSF. Residues 28–287 are Extracellular-facing; that stretch reads VKCFGNSFNG…VKKGKSIGYG (260 aa). N-linked (GlcNAc...) asparagine glycans are attached at residues N38, N65, N128, N154, N167, and N256. A helical membrane pass occupies residues 288–308; sequence GIIAIVVVFTFINLLVFIGFI. Topologically, residues 309–654 are cytoplasmic; the sequence is KVYARRGKLN…DDVFTELSCR (346 aa). The Protein kinase domain maps to 348 to 619; that stretch reads FSSENTLGQG…VIIWLGSETI (272 aa). Residues 354-362 and K376 each bind ATP; that span reads LGQGGFGTV. Residue Y421 is modified to Phosphotyrosine. D473 serves as the catalytic Proton acceptor. S477 bears the Phosphoserine mark. A Phosphothreonine modification is found at T513. Y521 carries the post-translational modification Phosphotyrosine.

It belongs to the protein kinase superfamily. Ser/Thr protein kinase family. CRK subfamily.

It is found in the membrane. It catalyses the reaction L-seryl-[protein] + ATP = O-phospho-L-seryl-[protein] + ADP + H(+). The enzyme catalyses L-threonyl-[protein] + ATP = O-phospho-L-threonyl-[protein] + ADP + H(+). This chain is Cysteine-rich receptor-like protein kinase 40 (CRK40), found in Arabidopsis thaliana (Mouse-ear cress).